Reading from the N-terminus, the 727-residue chain is UvrABC system protein C (727 aa).

The GIY-YIG domain maps to 16–95 (VDPGVYKFRD…IKEFDPRFNV (80 aa)). One can recognise a UVR domain in the interval 208 to 243 (DRLVRQLEARMQEASEELDFETAARLRDDVGALRRA). Disordered stretches follow at residues 503 to 527 (DADQVSGGDGGDLAPEAAIDPQTGR) and 679 to 727 (SADV…TGVE). The segment covering 701 to 711 (NGADIPREPVE) has biased composition (basic and acidic residues). Positions 718–727 (QSASQRTGVE) are enriched in polar residues.

This sequence belongs to the UvrC family. Interacts with UvrB in an incision complex.

Its subcellular location is the cytoplasm. Its function is as follows. The UvrABC repair system catalyzes the recognition and processing of DNA lesions. UvrC both incises the 5' and 3' sides of the lesion. The N-terminal half is responsible for the 3' incision and the C-terminal half is responsible for the 5' incision. In Rhodococcus jostii (strain RHA1), this protein is UvrABC system protein C.